Here is a 261-residue protein sequence, read N- to C-terminus: Flagellar L-ring protein (261 aa).

The first 18 residues, 1–18, serve as a signal peptide directing secretion; that stretch reads MAAMKRLLASSLLILLSG. Cysteine 19 carries the N-palmitoyl cysteine lipid modification. The S-diacylglycerol cysteine moiety is linked to residue cysteine 19. The segment at 37 to 67 is disordered; it reads TVDAVEGDKSESNSGLTDALRNRTDPVAGDP.

Belongs to the FlgH family. The basal body constitutes a major portion of the flagellar organelle and consists of four rings (L,P,S, and M) mounted on a central rod.

It is found in the cell outer membrane. The protein localises to the bacterial flagellum basal body. Assembles around the rod to form the L-ring and probably protects the motor/basal body from shearing forces during rotation. The polypeptide is Flagellar L-ring protein (Vibrio cholerae serotype O1 (strain ATCC 39541 / Classical Ogawa 395 / O395)).